The primary structure comprises 392 residues: Methylthioribose-1-phosphate isomerase (392 aa).

Asp-268 acts as the Proton donor in catalysis.

The protein belongs to the eIF-2B alpha/beta/delta subunits family. MtnA subfamily.

The protein resides in the cytoplasm. It is found in the nucleus. The enzyme catalyses 5-(methylsulfanyl)-alpha-D-ribose 1-phosphate = 5-(methylsulfanyl)-D-ribulose 1-phosphate. It functions in the pathway amino-acid biosynthesis; L-methionine biosynthesis via salvage pathway; L-methionine from S-methyl-5-thio-alpha-D-ribose 1-phosphate: step 1/6. Functionally, catalyzes the interconversion of methylthioribose-1-phosphate (MTR-1-P) into methylthioribulose-1-phosphate (MTRu-1-P). The sequence is that of Methylthioribose-1-phosphate isomerase from Ajellomyces capsulatus (strain G186AR / H82 / ATCC MYA-2454 / RMSCC 2432) (Darling's disease fungus).